Consider the following 222-residue polypeptide: Phosphoenolpyruvate guanylyltransferase (222 aa).

Phosphoenolpyruvate-binding residues include Thr-134, Gly-150, and Ser-153.

Belongs to the CofC family.

The catalysed reaction is phosphoenolpyruvate + GTP + H(+) = enolpyruvoyl-2-diphospho-5'-guanosine + diphosphate. Its pathway is cofactor biosynthesis; coenzyme F420 biosynthesis. Its function is as follows. Guanylyltransferase that catalyzes the activation of phosphoenolpyruvate (PEP) as enolpyruvoyl-2-diphospho-5'-guanosine, via the condensation of PEP with GTP. It is involved in the biosynthesis of coenzyme F420, a hydride carrier cofactor. The chain is Phosphoenolpyruvate guanylyltransferase from Roseiflexus sp. (strain RS-1).